The sequence spans 644 residues: MVTALSDVNNTDNYGAGQIQVLEGLEAVRKRPGMYIGSTSERGLHHLVWEIVDNSIDEALAGYANQIEVVIEKDNWIKVTDNGRGIPVDIQEKMGRPAVEVILTVLHAGGKFGGGGYKVSGGLHGVGSSVVNALSQDLEVYVHRNETIYHQAYKKGVPQFDLKEVGTTDKTGTVIRFKADGEIFTETTVYNYETLQQRIRELAFLNKGIQITLRDERDEENVREDSYHYEGGIKSYVELLNENKEPIHDEPIYIHQSKDDIEVEIAIQYNSGYATNLLTYANNIHTYEGGTHEDGFKRALTRVLNSYGLSSKIMKEEKDRLSGEDTREGMTAIISIKHGDPQFEGQTKTKLGNSEVRQVVDKLFSEHFERFLYENPQVARTVVEKGIMAARARVAAKKAREVTRRKSALDVASLPGKLADCSSKSPEECEIFLVEGDSAGGSTKSGRDSRTQAILPLRGKILNVEKARLDRILNNNEIRQMITAFGTGIGGDFDLAKARYHKIVIMTDADVDGAHIRTLLLTFFYRFMRPLIEAGYVYIAQPPLYKLTQGKQKYYVYNDRELDKLKSELNPTPKWSIARYKGLGEMNADQLWETTMNPEHRALLQVKLEDAIEADQTFEMLMGDVVENRRQFIEDNAVYANLDF.

The Toprim domain occupies 429-543 (CEIFLVEGDS…AGYVYIAQPP (115 aa)). 3 residues coordinate Mg(2+): Glu-435, Asp-508, and Asp-510.

Belongs to the type II topoisomerase GyrB family. In terms of assembly, heterotetramer, composed of two GyrA and two GyrB chains. In the heterotetramer, GyrA contains the active site tyrosine that forms a transient covalent intermediate with DNA, while GyrB binds cofactors and catalyzes ATP hydrolysis. The cofactor is Mg(2+). Mn(2+) is required as a cofactor. Requires Ca(2+) as cofactor.

Its subcellular location is the cytoplasm. The enzyme catalyses ATP-dependent breakage, passage and rejoining of double-stranded DNA.. Functionally, a type II topoisomerase that negatively supercoils closed circular double-stranded (ds) DNA in an ATP-dependent manner to modulate DNA topology and maintain chromosomes in an underwound state. Negative supercoiling favors strand separation, and DNA replication, transcription, recombination and repair, all of which involve strand separation. Also able to catalyze the interconversion of other topological isomers of dsDNA rings, including catenanes and knotted rings. Type II topoisomerases break and join 2 DNA strands simultaneously in an ATP-dependent manner. In Staphylococcus aureus (strain USA300), this protein is DNA gyrase subunit B.